Here is a 45-residue protein sequence, read N- to C-terminus: MADSNCGCGSSCKCGDSCSCEKNYNKECDNCSCGSNCSCGSNCNC.

This sequence belongs to the metallothionein superfamily. Type 15 family. In terms of tissue distribution, expressed in phloem and mesophyll cells of leaves, vascular tissues of cotyledons, sepals and petals. Expressed in anthers. Expressed in root endodermis and at lower levels in cortex of mature region of roots.

Its function is as follows. Metallothioneins have a high content of cysteine residues that bind various heavy metals. Functions as a metal chelator of copper (Cu) and zinc (Zn). Plays a role in Cu homeostasis in the roots under elevated Cu concentration. Functions cooperatively with the phytochelatin synthase PCS1 to protect plants from Cu and cadmium (Cd) toxicity. Plays a role in Cu homeostasis, specifically in the remobilization of Cu from senescing leaves. The mobilization of Cu from internal sources is important for seed development. Confers tolerance to Cd and plays a role in Cd and Zn homeostasis. The polypeptide is Metallothionein-like protein 1A (MT1A) (Arabidopsis thaliana (Mouse-ear cress)).